The following is a 72-amino-acid chain: Translation initiation factor IF-1 (72 aa).

The 72-residue stretch at 1-72 folds into the S1-like domain; the sequence is MAKEDNIEMQ…SKGRIVFRSR (72 aa).

The protein belongs to the IF-1 family. As to quaternary structure, component of the 30S ribosomal translation pre-initiation complex which assembles on the 30S ribosome in the order IF-2 and IF-3, IF-1 and N-formylmethionyl-tRNA(fMet); mRNA recruitment can occur at any time during PIC assembly.

It is found in the cytoplasm. One of the essential components for the initiation of protein synthesis. Stabilizes the binding of IF-2 and IF-3 on the 30S subunit to which N-formylmethionyl-tRNA(fMet) subsequently binds. Helps modulate mRNA selection, yielding the 30S pre-initiation complex (PIC). Upon addition of the 50S ribosomal subunit IF-1, IF-2 and IF-3 are released leaving the mature 70S translation initiation complex. In Salmonella paratyphi A (strain ATCC 9150 / SARB42), this protein is Translation initiation factor IF-1.